A 266-amino-acid polypeptide reads, in one-letter code: Glucosamine-6-phosphate deaminase (266 aa).

The active-site Proton acceptor; for enolization step is the Asp-72. Asp-141 functions as the For ring-opening step in the catalytic mechanism. Catalysis depends on His-143, which acts as the Proton acceptor; for ring-opening step. Glu-148 acts as the For ring-opening step in catalysis.

Belongs to the glucosamine/galactosamine-6-phosphate isomerase family. NagB subfamily. Homohexamer; trimer of disulfide-linked dimers.

The catalysed reaction is alpha-D-glucosamine 6-phosphate + H2O = beta-D-fructose 6-phosphate + NH4(+). It participates in amino-sugar metabolism; N-acetylneuraminate degradation; D-fructose 6-phosphate from N-acetylneuraminate: step 5/5. With respect to regulation, allosterically activated by N-acetylglucosamine 6-phosphate (GlcNAc6P). Functionally, catalyzes the reversible isomerization-deamination of glucosamine 6-phosphate (GlcN6P) to form fructose 6-phosphate (Fru6P) and ammonium ion. This chain is Glucosamine-6-phosphate deaminase, found in Shigella dysenteriae serotype 1 (strain Sd197).